We begin with the raw amino-acid sequence, 33 residues long: Large ribosomal subunit protein uL24 (33 aa).

It belongs to the universal ribosomal protein uL24 family. As to quaternary structure, component of the large ribosomal subunit.

The protein localises to the cytoplasm. Functionally, component of the large ribosomal subunit. The ribosome is a large ribonucleoprotein complex responsible for the synthesis of proteins in the cell. This Xenopus laevis (African clawed frog) protein is Large ribosomal subunit protein uL24 (rpl26).